A 422-amino-acid chain; its full sequence is uncharacterized protein (422 aa).

Residues 5–83 form the RRM domain; the sequence is CVVYVGNIPY…RRLRVDFPTA (79 aa). The disordered stretch occupies residues 337–358; the sequence is RSSSIPSSGSIRSPSLTTTSAQ.

Its subcellular location is the nucleus. This is an uncharacterized protein from Schizosaccharomyces pombe (strain 972 / ATCC 24843) (Fission yeast).